We begin with the raw amino-acid sequence, 154 residues long: Protein X (154 aa).

A mitochondrial targeting sequence region spans residues 68-117 (PCALRFTSARRMETTVNAHRNLPKVLHKRTLGLSAMSTTDLEAYFKDCVF).

It belongs to the orthohepadnavirus protein X family. As to quaternary structure, may form homodimer. May interact with host CEBPA, CFLAR, CREB1, DDB1, E4F1, HBXIP, HSPD1/HSP60, NFKBIA, POLR2E and SMAD4. Interacts with host SMC5-SMC6 complex and induces its degradation. Interacts with host TRPC4AP; leading to prevent ubiquitination of TRPC4AP. Interacts with host PLSCR1; this interaction promotes ubiquitination and degradation of HBx and impairs HBx-mediated cell proliferation. A fraction may be phosphorylated in insect cells and HepG2 cells, a human hepatoblastoma cell line. Phosphorylated in vitro by host protein kinase C or mitogen-activated protein kinase. N-acetylated in insect cells.

It localises to the host cytoplasm. The protein resides in the host nucleus. It is found in the host mitochondrion. Its function is as follows. Multifunctional protein that plays a role in silencing host antiviral defenses and promoting viral transcription. Does not seem to be essential for HBV infection. May be directly involved in development of cirrhosis and liver cancer (hepatocellular carcinoma). Most of cytosolic activities involve modulation of cytosolic calcium. The effect on apoptosis is controversial depending on the cell types in which the studies have been conducted. May induce apoptosis by localizing in mitochondria and causing loss of mitochondrial membrane potential. May also modulate apoptosis by binding host CFLAR, a key regulator of the death-inducing signaling complex (DISC). Promotes viral transcription by using the host E3 ubiquitin ligase DDB1 to target the SMC5-SMC6 complex to proteasomal degradation. This host complex would otherwise bind to viral episomal DNA, and prevents its transcription. Moderately stimulates transcription of many different viral and cellular transcription elements. Promoters and enhancers stimulated by HBx contain DNA binding sites for NF-kappa-B, AP-1, AP-2, c-EBP, ATF/CREB, or the calcium-activated factor NF-AT. This chain is Protein X, found in Hepatitis B virus genotype B1 subtype adw (isolate Japan/pJDW233/1988) (HBV-B).